A 143-amino-acid polypeptide reads, in one-letter code: Transcriptional regulator MraZ (143 aa).

SpoVT-AbrB domains lie at 5 to 47 (THTP…PMQE) and 76 to 119 (ASSE…DLRT).

This sequence belongs to the MraZ family. In terms of assembly, forms oligomers.

The protein resides in the cytoplasm. Its subcellular location is the nucleoid. The polypeptide is Transcriptional regulator MraZ (Kineococcus radiotolerans (strain ATCC BAA-149 / DSM 14245 / SRS30216)).